A 194-amino-acid chain; its full sequence is Leucyl/phenylalanyl-tRNA--protein transferase (194 aa).

The protein belongs to the L/F-transferase family.

The protein localises to the cytoplasm. It carries out the reaction N-terminal L-lysyl-[protein] + L-leucyl-tRNA(Leu) = N-terminal L-leucyl-L-lysyl-[protein] + tRNA(Leu) + H(+). It catalyses the reaction N-terminal L-arginyl-[protein] + L-leucyl-tRNA(Leu) = N-terminal L-leucyl-L-arginyl-[protein] + tRNA(Leu) + H(+). The catalysed reaction is L-phenylalanyl-tRNA(Phe) + an N-terminal L-alpha-aminoacyl-[protein] = an N-terminal L-phenylalanyl-L-alpha-aminoacyl-[protein] + tRNA(Phe). Functionally, functions in the N-end rule pathway of protein degradation where it conjugates Leu, Phe and, less efficiently, Met from aminoacyl-tRNAs to the N-termini of proteins containing an N-terminal arginine or lysine. This Chlorobium luteolum (strain DSM 273 / BCRC 81028 / 2530) (Pelodictyon luteolum) protein is Leucyl/phenylalanyl-tRNA--protein transferase.